A 442-amino-acid polypeptide reads, in one-letter code: Circumsporozoite protein (442 aa).

The N-terminal stretch at 1–18 (MMRKLAILSVSSFLFVEA) is a signal peptide. The tract at residues 69–357 (SRSLGENDDG…VKNNNNEEPS (289 aa)) is disordered. Residues 81 to 94 (DNGNNNNGNNNNGD) are compositionally biased toward low complexity. Over residues 95-115 (NGREGKDEDKRDGNNEDNEKL) the composition is skewed to basic and acidic residues. The tract at residues 114–121 (KLRKPKHK) is required for the binding to heparan sulfate proteoglycans (HSPGs) on the surface of host hepatocytes. The tract at residues 122–126 (KLKQP) is region I; contains the proteolytic cleavage site. Low complexity predominate over residues 130 to 318 (NPDPNANPNV…PNANPNANPN (189 aa)). Tandem repeats lie at residues 134–137 (NANP), 138–141 (NVDP), 142–145 (NANP), 146–149 (NVDP), 150–153 (NANP), 154–157 (NANP), 158–161 (NANP), 162–165 (NANP), 166–169 (NANP), 170–173 (NANP), 174–177 (NANP), 178–181 (NANP), 182–185 (NANP), 186–189 (NANP), 190–193 (NANP), 194–197 (NANP), 198–201 (NANP), 202–205 (NANP), 206–209 (NANP), 210–213 (NVDP), 214–217 (NANP), 218–221 (NANP), 222–225 (NANP), 226–229 (NANP), 230–233 (NANP), 234–237 (NANP), 238–241 (NANP), 242–245 (NANP), 246–249 (NANP), 250–253 (NANP), 254–257 (NANP), 258–261 (NANP), 262–265 (NANP), 266–269 (NANP), 270–273 (NANP), 274–277 (NANP), 278–281 (NANP), 282–285 (NANP), 286–289 (NANP), 290–293 (NANP), 294–297 (NANP), 298–301 (NANP), 302–305 (NANP), 306–309 (NANP), 310–313 (NANP), and 314–317 (NANP). A 46 X 4 AA tandem repeats of N-[AV]-[ND]-P region spans residues 134–317 (NANPNVDPNA…NPNANPNANP (184 aa)). Positions 319–334 (KNNQGNGQGHNMPNDP) are enriched in polar residues. Low complexity predominate over residues 340 to 354 (ENANANNAVKNNNNE). One can recognise a TSP type-1 domain in the interval 367 to 420 (KIQNSLSTEWSPCSVTCGNGIQVRIKPGSADKPKDQLDYENDIEKKICKMEKCS). 2 disulfide bridges follow: C379/C414 and C383/C419. An O-linked (Fuc) threonine glycan is attached at T382. C419 carries GPI-anchor amidated cysteine lipidation. Positions 420-442 (SSVFNVVNSSIGLIMVLSFLFLN) are cleaved as a propeptide — removed in mature form.

It belongs to the plasmodium circumsporozoite protein family. Post-translationally, during host cell invasion, proteolytically cleaved at the cell membrane in the region I by a papain-like cysteine protease of parasite origin. Cleavage is triggered by the sporozoite contact with highly sulfated heparan sulfate proteoglycans (HSPGs) present on the host hepatocyte cell surface. Cleavage exposes the TSP type-1 (TSR) domain and is required for productive invasion of host hepatocytes but not for adhesion to the host cell membrane. Cleavage is dispensable for sporozoite development in the oocyst, motility and for traversal of host and vector cells. In terms of processing, O-glycosylated; maybe by POFUT2.

The protein resides in the cell membrane. It is found in the cytoplasm. Essential sporozoite protein. In the mosquito vector, required for sporozoite development in the oocyst, migration through the vector hemolymph and entry into the vector salivary glands. In the vertebrate host, required for sporozoite migration through the host dermis and infection of host hepatocytes. Binds to highly sulfated heparan sulfate proteoglycans (HSPGs) on the surface of host hepatocytes. Its function is as follows. In the vertebrate host, binds to highly sulfated heparan sulfate proteoglycans (HSPGs) on the surface of host hepatocytes and is required for sporozoite invasion of the host hepatocytes. This Plasmodium falciparum (isolate Wellcome) protein is Circumsporozoite protein.